We begin with the raw amino-acid sequence, 405 residues long: MDSWSYGRSVFMSNETLLPCDTFAKNRRFEQRLSNNDDVLISDMAGNSNGFSAVSITKVVPEEEDEENISSSSKFSSQELNRIDFKLRSFLDLGNDDDDTSSRGFALPSKKSRASNLCSQNPLCQVYGCSKDLSSSKDYHKRHRVCEAHSKTSVVIVNGLEQRFCQQCSRFHFLSEFDDGKRSCRRRLAGHNERRRKPAFYFLPGKRHKLLRTSQDVVGNKFLENSSLVLPESFPGSLLYRVIDEDDHRTSRLVSFKDEPTCSMFPTNEQNSSRTYESKPAIYSTEVSSIWDLHETAASRSTRALSLLSAQSQQHLSKFPNTTFSITQPNQNLNHSSSTDYHQMEQPLWIDPGKTNSAGSSSCKGKGTSTVDLLQLSSHLQRIEQQRNYTGDVKQEYNELYFPGS.

The segment at 121 to 198 (NPLCQVYGCS…AGHNERRRKP (78 aa)) adopts an SBP-type zinc-finger fold. Residues cysteine 124, cysteine 129, cysteine 146, histidine 149, cysteine 165, cysteine 168, histidine 172, and cysteine 184 each coordinate Zn(2+). The short motif at 181-197 (KRSCRRRLAGHNERRRK) is the Bipartite nuclear localization signal element.

Zn(2+) serves as cofactor.

It is found in the nucleus. In terms of biological role, trans-acting factor that binds specifically to the consensus nucleotide sequence 5'-TNCGTACAA-3'. This is Squamosa promoter-binding-like protein 6 (SPL6) from Arabidopsis thaliana (Mouse-ear cress).